A 69-amino-acid chain; its full sequence is Sec-independent protein translocase protein TatA (69 aa).

Residues 1–21 (MMPGPFELIIILVIVLLLFGG) form a helical membrane-spanning segment.

The protein belongs to the TatA/E family. The Tat system comprises two distinct complexes: a TatABC complex, containing multiple copies of TatA, TatB and TatC subunits, and a separate TatA complex, containing only TatA subunits. Substrates initially bind to the TatABC complex, which probably triggers association of the separate TatA complex to form the active translocon.

It is found in the cell inner membrane. Functionally, part of the twin-arginine translocation (Tat) system that transports large folded proteins containing a characteristic twin-arginine motif in their signal peptide across membranes. TatA could form the protein-conducting channel of the Tat system. The polypeptide is Sec-independent protein translocase protein TatA (Vesicomyosocius okutanii subsp. Calyptogena okutanii (strain HA)).